The following is a 130-amino-acid chain: MANNRYQGTGRRKTSVARVTLVPGSGKFTINKKDISEYFNFDTLRVIAKEALELTNNAESYDVTVNVKGGGYTGQAGAIRHGVARALLEVDPDYRAELKRAGFLTRDPRKKERKKYGLKKARKSPQFSKR.

Residues 102 to 130 (GFLTRDPRKKERKKYGLKKARKSPQFSKR) are disordered. Over residues 111–130 (KERKKYGLKKARKSPQFSKR) the composition is skewed to basic residues.

Belongs to the universal ribosomal protein uS9 family.

In Finegoldia magna (strain ATCC 29328 / DSM 20472 / WAL 2508) (Peptostreptococcus magnus), this protein is Small ribosomal subunit protein uS9.